Reading from the N-terminus, the 351-residue chain is Glucan endo-1,3-beta-glucosidase (351 aa).

The first 32 residues, 1-32 (MALWYLFNKRSLGAAVLILVGLLMCNIQITGA), serve as a signal peptide directing secretion. Gln33 carries the pyrrolidone carboxylic acid modification. N-linked (GlcNAc...) asparagine glycans are attached at residues Asn79 and Asn99. Glu128 functions as the Proton donor in the catalytic mechanism. N-linked (GlcNAc...) asparagine glycosylation is present at Asn235. Glu268 serves as the catalytic Nucleophile.

Belongs to the glycosyl hydrolase 17 family. In terms of processing, glycosylated. Post-translationally, the N-terminus is blocked.

Its subcellular location is the secreted. It localises to the extracellular space. The protein resides in the extracellular matrix. It catalyses the reaction Hydrolysis of (1-&gt;3)-beta-D-glucosidic linkages in (1-&gt;3)-beta-D-glucans.. Functionally, implicated in the defense of plants against pathogens. The sequence is that of Glucan endo-1,3-beta-glucosidase (SP41B) from Nicotiana tabacum (Common tobacco).